Consider the following 307-residue polypeptide: MRLQRKDLLGLKDLSAEEIELILETAAPMKEILGRDIKKVPTLRGKLVVTMFYEPSTRTRTSFELAAKYMGADTMSIATATSSVQKGESLRDTARTLAAMGTDAVIIRHSAAGSPALLARTIEASVLNGGDGMHEHPTQALLDMFTIKEKLGGFKGLKVAILGDILHSRVARSNIWGLTKMGAEVRVVGPATLIPPEIENLGVKVYYNAEEALKGVDVINVLRIQRERQKKGLFPSLREYARLYELTPERLKLARPGALVLHPGPMNRGIEIAPAVADGLQAAITEQVTNGVAVRMALLYLLIGGAN.

Carbamoyl phosphate-binding residues include Arg-58 and Thr-59. Residue Lys-86 participates in L-aspartate binding. Carbamoyl phosphate contacts are provided by Arg-108, His-136, and Gln-139. L-aspartate-binding residues include Arg-169 and Arg-223. Residues Gly-264 and Pro-265 each coordinate carbamoyl phosphate.

The protein belongs to the aspartate/ornithine carbamoyltransferase superfamily. ATCase family. Heterododecamer (2C3:3R2) of six catalytic PyrB chains organized as two trimers (C3), and six regulatory PyrI chains organized as three dimers (R2).

The enzyme catalyses carbamoyl phosphate + L-aspartate = N-carbamoyl-L-aspartate + phosphate + H(+). It participates in pyrimidine metabolism; UMP biosynthesis via de novo pathway; (S)-dihydroorotate from bicarbonate: step 2/3. In terms of biological role, catalyzes the condensation of carbamoyl phosphate and aspartate to form carbamoyl aspartate and inorganic phosphate, the committed step in the de novo pyrimidine nucleotide biosynthesis pathway. In Moorella thermoacetica (strain ATCC 39073 / JCM 9320), this protein is Aspartate carbamoyltransferase catalytic subunit.